A 589-amino-acid chain; its full sequence is GTPase LSG1-2 (589 aa).

The disordered stretch occupies residues 1–26 (MGKSEKTSLGRSLVKHHNHMIQESKD). Residues 158 to 366 (WRQLWRVLER…LCDCPGLVFP (209 aa)) form the CP-type G domain. A DARXP motif motif is present at residues 176–180 (DARDP). The G4 stretch occupies residues 206 to 209 (NKAD). Residue 206 to 209 (NKAD) coordinates GTP. A G5 region spans residues 237–239 (AAT). Residues 315–322 (GYPNVGKS) form a G1 region. 318 to 323 (NVGKSS) contacts GTP. The segment at 341–345 (GKTKH) is G2. The segment at 359–362 (DCPG) is G3. Position 362 (Gly-362) interacts with GTP. Residues 495 to 509 (GSESDDSAVGDETEN) are compositionally biased toward acidic residues. 2 disordered regions span residues 495 to 515 (GSES…VPGI) and 534 to 589 (SKKV…LTMR). The short motif at 534–541 (SKKVTAKK) is the Nuclear localization signal element. The segment covering 534–558 (SKKVTAKKQTASHKQHKKPQRKKDR) has biased composition (basic residues). Over residues 580–589 (PANTGPLTMR) the composition is skewed to polar residues.

This sequence belongs to the TRAFAC class YlqF/YawG GTPase family. As to expression, ubiquitous, with the highest expression in reproductive and strongly dividing tissues.

It is found in the cytoplasm. The protein resides in the nucleus. GTPase involved in ribosome biogenesis. Binds to 23S rRNA and associates with 60S pre-ribosomes. Involved in early cotyledon and leaf development. In Arabidopsis thaliana (Mouse-ear cress), this protein is GTPase LSG1-2.